The following is a 145-amino-acid chain: Maximins 3/H3 type 1 (145 aa).

The N-terminal stretch at M1–A18 is a signal peptide. 2 consecutive propeptides follow at residues R19–I43 and R74–R124. An Isoleucine amide modification is found at I144.

It belongs to the bombinin family. Expressed by the skin glands.

Its subcellular location is the secreted. In terms of biological role, maximin-3 shows antibacterial activity against both Gram-positive and Gram-negative bacteria. It also shows antimicrobial activity against the fungus C.albicans, but not against A.flavus nor P.uticale. It has little hemolytic activity. It possess a significant cytotoxicity against tumor cell lines. It possess a significant anti-HIV activity. It shows high spermicidal activity. Functionally, maximin-H3 shows antibacterial activity against both Gram-positive and Gram-negative bacteria. It also shows antimicrobial activity against the fungus C.albicans. Shows strong hemolytic activity. This chain is Maximins 3/H3 type 1, found in Bombina maxima (Giant fire-bellied toad).